The primary structure comprises 707 residues: DCC-interacting protein 13-alpha (707 aa).

The tract at residues 1 to 428 is required for RAB5A binding; it reads MPGIDKLPIE…PPTARTSSSG (428 aa). In terms of domain architecture, BAR spans 3-268; it reads GIDKLPIEET…DPLYLPDPDP (266 aa). Residues 234–257 are a coiled coil; the sequence is QNVRREMDGDVETMQQTIEDLEVA. One can recognise a PH domain in the interval 277 to 375; that stretch reads LTRKAGYLNA…WICTINNISK (99 aa). Disordered regions lie at residues 397–433, 466–490, and 636–707; these read AVTP…LGSE, GQAK…STKS, and EKQK…ESEA. Phosphothreonine is present on T399. Residue S401 is modified to Phosphoserine. The F&amp;H signature appears at 403–414; that stretch reads SFQQRHESLRPG. S410 is subject to Phosphoserine; by PKA. The PID domain occupies 495–655; that stretch reads SILHQLFIVR…EKQQKELSKQ (161 aa). The stretch at 620-670 forms a coiled coil; the sequence is LAKQIALHAELDRRASEKQKEIERVKEKQQKELSKQKQIEKDLEEQSRLIA. The segment covering 636–666 has biased composition (basic and acidic residues); sequence EKQKEIERVKEKQQKELSKQKQIEKDLEEQS. Positions 679 to 691 are enriched in low complexity; it reads GSEGQLVLSSSQS. Phosphoserine occurs at positions 691 and 694. A compositionally biased stretch (basic and acidic residues) spans 698 to 707; the sequence is EEGKKRESEA.

In terms of assembly, homodimer. Binds RAB5A/Rab5 through an N-terminal domain. This interaction is essential for its recruitment to endosomal membranes as well as its role in cell proliferation. Binds DCC and the catalytic domain of the inactive form of AKT2 through its PID domain. Binds PIK3CA and subunits of the NuRD/MeCP1 complex. Interacts with OCRL and INPP5B. Interacts with NTRK2. Interacts with APPL2; interaction is independent of follicle stimulating hormone stimulation; interaction is decreased by adiponectin in a time-dependent manner. Forms a complex with APPL2 and RUVBL2. Forms a complex comprising APPL2, RUVBL2, CTNNB1, HDAC1 and HDAC2; interaction reduces interaction between CTNNB1, HDAC1, HDAC2 and RUVBL2 leading to the decrease of deacetylase activity of this complex; affects the recruitment of repressive complexes to the Wnt target genes. Interacts with ANXA2. Interacts with TGFBR1; interaction is TGF beta dependent; mediates trafficking of the TGFBR1 from the endosomes to the nucleus via microtubules in a TRAF6-dependent manner. Interacts with PRKCZ. Interacts with PIK3R1 and APPL2. Interacts with ADIPOR1; ADIPOQ enhances this interaction; inhibites adiponectin-stimulated binding of APPL2 to ADIPOR1. Post-translationally, phosphorylation at Ser-410 by PKA severely impairs binding to OCRL. As to expression, expressed in insulin-target tissues including skeletal muscle, liver, fat, and brain.

The protein resides in the early endosome membrane. It localises to the nucleus. It is found in the cytoplasm. The protein localises to the endosome. Its subcellular location is the cell projection. The protein resides in the ruffle. It localises to the cytoplasmic vesicle. It is found in the phagosome. Multifunctional adapter protein that binds to various membrane receptors, nuclear factors and signaling proteins to regulate many processes, such as cell proliferation, immune response, endosomal trafficking and cell metabolism. Regulates signaling pathway leading to cell proliferation through interaction with RAB5A and subunits of the NuRD/MeCP1 complex. Functions as a positive regulator of innate immune response via activation of AKT1 signaling pathway by forming a complex with APPL1 and PIK3R1. Inhibits Fc-gamma receptor-mediated phagocytosis through PI3K/Akt signaling in macrophages. Regulates TLR4 signaling in activated macrophages. Involved in trafficking of the TGFBR1 from the endosomes to the nucleus via microtubules in a TRAF6-dependent manner. Plays a role in cell metabolism by regulating adiponecting and insulin signaling pathways. Required for fibroblast migration through HGF cell signaling. Positive regulator of beta-catenin/TCF-dependent transcription through direct interaction with RUVBL2/reptin resulting in the relief of RUVBL2-mediated repression of beta-catenin/TCF target genes by modulating the interactions within the beta-catenin-reptin-HDAC complex. This chain is DCC-interacting protein 13-alpha, found in Mus musculus (Mouse).